The sequence spans 234 residues: Demethylmenaquinone methyltransferase (234 aa).

S-adenosyl-L-methionine contacts are provided by residues T58, D79, and 106 to 107 (NA).

This sequence belongs to the class I-like SAM-binding methyltransferase superfamily. MenG/UbiE family.

The catalysed reaction is a 2-demethylmenaquinol + S-adenosyl-L-methionine = a menaquinol + S-adenosyl-L-homocysteine + H(+). It participates in quinol/quinone metabolism; menaquinone biosynthesis; menaquinol from 1,4-dihydroxy-2-naphthoate: step 2/2. Its function is as follows. Methyltransferase required for the conversion of demethylmenaquinol (DMKH2) to menaquinol (MKH2). In Geobacillus sp. (strain WCH70), this protein is Demethylmenaquinone methyltransferase.